The chain runs to 150 residues: Peptide deformylase (150 aa).

Positions 88 and 130 each coordinate Fe cation. E131 is an active-site residue. H134 is a Fe cation binding site.

Belongs to the polypeptide deformylase family. Fe(2+) is required as a cofactor.

It catalyses the reaction N-terminal N-formyl-L-methionyl-[peptide] + H2O = N-terminal L-methionyl-[peptide] + formate. Functionally, removes the formyl group from the N-terminal Met of newly synthesized proteins. Requires at least a dipeptide for an efficient rate of reaction. N-terminal L-methionine is a prerequisite for activity but the enzyme has broad specificity at other positions. The polypeptide is Peptide deformylase (Desulfitobacterium hafniense (strain DSM 10664 / DCB-2)).